The sequence spans 347 residues: Methionine import ATP-binding protein MetN (347 aa).

The ABC transporter domain occupies 2-247 (ITTTGLTKVY…PGSELASALF (246 aa)). ATP is bound at residue 38-45 (GQSGAGKS).

This sequence belongs to the ABC transporter superfamily. Methionine importer (TC 3.A.1.24) family. As to quaternary structure, the complex is composed of two ATP-binding proteins (MetN), two transmembrane proteins (MetI) and a solute-binding protein (MetQ).

The protein resides in the cell membrane. The catalysed reaction is L-methionine(out) + ATP + H2O = L-methionine(in) + ADP + phosphate + H(+). The enzyme catalyses D-methionine(out) + ATP + H2O = D-methionine(in) + ADP + phosphate + H(+). In terms of biological role, part of the ABC transporter complex MetNIQ involved in methionine import. Responsible for energy coupling to the transport system. The polypeptide is Methionine import ATP-binding protein MetN (Streptomyces avermitilis (strain ATCC 31267 / DSM 46492 / JCM 5070 / NBRC 14893 / NCIMB 12804 / NRRL 8165 / MA-4680)).